The sequence spans 339 residues: MNKTAEDLLDSLKCASKDLSSALTSVTIKFNCIFISTIVLISYCFILLAIQALLRHNIFSNSTRLILIVCLLNSVVHQTTMMETRVRQIYRSFLFASDPCKLLYRSSDCVVDLYFFFLTGYFSTYSVFSLTSDRLVSHYKSKFYHTHQYFIAISLLVIQLLLTLVSFYIAFYGVSLAGYVSVCIQYPKAAVQYGTINTVRTMVMVCCLIVTGFTYYLSVKSEKQIQKISYSPGERYSAYENITTSQSVCIFIILQLSCVMLTSIGMNLLLMMGEAMSEGTFTTIALFLPGITYANLCLPLVIYFKTKLTIRNRKFRIAVMTSMYGDAGEHIARLKKSWE.

A run of 6 helical transmembrane segments spans residues 33-53, 110-130, 150-170, 199-219, 250-270, and 284-304; these read IFISTIVLISYCFILLAIQAL, VVDLYFFFLTGYFSTYSVFSL, FIAISLLVIQLLLTLVSFYIA, VRTMVMVCCLIVTGFTYYLSV, IFIILQLSCVMLTSIGMNLLL, and IALFLPGITYANLCLPLVIYF.

The protein belongs to the nematode receptor-like protein sra family.

The protein resides in the membrane. The sequence is that of Serpentine receptor class alpha-22 (sra-22) from Caenorhabditis elegans.